Here is a 291-residue protein sequence, read N- to C-terminus: Nitrogenase iron protein (291 aa).

11–18 lines the ATP pocket; that stretch reads GKGGIGKS. Residue Cys-99 coordinates [4Fe-4S] cluster. An ADP-ribosylarginine; by dinitrogenase reductase ADP-ribosyltransferase modification is found at Arg-102. Cys-133 serves as a coordination point for [4Fe-4S] cluster.

It belongs to the NifH/BchL/ChlL family. As to quaternary structure, homodimer. Requires [4Fe-4S] cluster as cofactor. In terms of processing, the reversible ADP-ribosylation of Arg-102 inactivates the nitrogenase reductase and regulates nitrogenase activity.

It catalyses the reaction N2 + 8 reduced [2Fe-2S]-[ferredoxin] + 16 ATP + 16 H2O = H2 + 8 oxidized [2Fe-2S]-[ferredoxin] + 2 NH4(+) + 16 ADP + 16 phosphate + 6 H(+). In terms of biological role, the key enzymatic reactions in nitrogen fixation are catalyzed by the nitrogenase complex, which has 2 components: the iron protein and the molybdenum-iron protein. The sequence is that of Nitrogenase iron protein from Cereibacter sphaeroides (strain ATCC 17023 / DSM 158 / JCM 6121 / CCUG 31486 / LMG 2827 / NBRC 12203 / NCIMB 8253 / ATH 2.4.1.) (Rhodobacter sphaeroides).